The sequence spans 591 residues: Metalloendopeptidase OPG085 (591 aa).

H41 is a binding site for Zn(2+). E44 is an active-site residue. Residues H45 and E112 each coordinate Zn(2+).

It belongs to the peptidase M44 family. It depends on Zn(2+) as a cofactor. Undergoes proteolytic processing during the course of infection. May be cleaved into 46 kDa and 22 kDa products (Potential).

It localises to the virion. In terms of biological role, probably involved in maturation of some viral proteins by processing them preferentially at Ala-Gly-|-Ser/Thr/Lys motifs. Does not seem to be responsible for the cleavage of major core proteins. The chain is Metalloendopeptidase OPG085 (OPG085) from Monkeypox virus.